A 259-amino-acid polypeptide reads, in one-letter code: MARYDRAITVFSPDGHLFQVEYAMEAVRKGNAAVGVRGTDTVVLGVEKKSTPKLQDSRSVRKIVNLDDHIALACAGLKADARVLVNKARIECQSHRLTVEDPVTVEYITRYIAGLQQKYTQSGGVRPFGLSTLIIGFDPHTGVPSLYQTDPSGTFSAWKANATGRNSNSTREFLEKNYKETSGQETVKLAIRALLEVVESGGKNIEVAVMTKEHGLKQLEEAEIDAIVAEIEAEKAAAEAAKRPHRRNLVELKFVLNYP.

The protein belongs to the peptidase T1A family. As to quaternary structure, the 26S proteasome consists of a 20S proteasome core and two 19S regulatory subunits. The 20S proteasome core is composed of 28 subunits that are arranged in four stacked rings, resulting in a barrel-shaped structure. The two end rings are each formed by seven alpha subunits, and the two central rings are each formed by seven beta subunits. The catalytic chamber with the active sites is on the inside of the barrel.

The protein localises to the cytoplasm. Its subcellular location is the nucleus. Functionally, the proteasome is a multicatalytic proteinase complex which is characterized by its ability to cleave peptides with Arg, Phe, Tyr, Leu, and Glu adjacent to the leaving group at neutral or slightly basic pH. The proteasome has an ATP-dependent proteolytic activity. This chain is Proteasome subunit alpha type-7 (PAD1), found in Solanum lycopersicum (Tomato).